The sequence spans 194 residues: Protein GrpE (194 aa).

Residues 1-12 (MSSKEQNTPNEQ) show a composition bias toward polar residues. The tract at residues 1-39 (MSSKEQNTPNEQASDEIETEQAKNQGADTAAEAADQRDE) is disordered.

This sequence belongs to the GrpE family. In terms of assembly, homodimer.

The protein localises to the cytoplasm. Its function is as follows. Participates actively in the response to hyperosmotic and heat shock by preventing the aggregation of stress-denatured proteins, in association with DnaK and GrpE. It is the nucleotide exchange factor for DnaK and may function as a thermosensor. Unfolded proteins bind initially to DnaJ; upon interaction with the DnaJ-bound protein, DnaK hydrolyzes its bound ATP, resulting in the formation of a stable complex. GrpE releases ADP from DnaK; ATP binding to DnaK triggers the release of the substrate protein, thus completing the reaction cycle. Several rounds of ATP-dependent interactions between DnaJ, DnaK and GrpE are required for fully efficient folding. The protein is Protein GrpE of Erwinia tasmaniensis (strain DSM 17950 / CFBP 7177 / CIP 109463 / NCPPB 4357 / Et1/99).